An 88-amino-acid chain; its full sequence is Small ribosomal subunit protein uS15 (88 aa).

It belongs to the universal ribosomal protein uS15 family. As to quaternary structure, part of the 30S ribosomal subunit. Forms a bridge to the 50S subunit in the 70S ribosome, contacting the 23S rRNA.

In terms of biological role, one of the primary rRNA binding proteins, it binds directly to 16S rRNA where it helps nucleate assembly of the platform of the 30S subunit by binding and bridging several RNA helices of the 16S rRNA. Forms an intersubunit bridge (bridge B4) with the 23S rRNA of the 50S subunit in the ribosome. The protein is Small ribosomal subunit protein uS15 of Mycoplasmopsis pulmonis (strain UAB CTIP) (Mycoplasma pulmonis).